The sequence spans 246 residues: DNA repair protein RecO (246 aa).

Belongs to the RecO family.

Involved in DNA repair and RecF pathway recombination. The sequence is that of DNA repair protein RecO from Methylobacterium nodulans (strain LMG 21967 / CNCM I-2342 / ORS 2060).